The sequence spans 418 residues: Glutamyl-tRNA reductase (418 aa).

Residues 49-52 (TCNR), Ser-109, 114-116 (EPQ), and Gln-120 contribute to the substrate site. Residue Cys-50 is the Nucleophile of the active site. 189-194 (GAGETI) provides a ligand contact to NADP(+).

The protein belongs to the glutamyl-tRNA reductase family. As to quaternary structure, homodimer.

The catalysed reaction is (S)-4-amino-5-oxopentanoate + tRNA(Glu) + NADP(+) = L-glutamyl-tRNA(Glu) + NADPH + H(+). The protein operates within porphyrin-containing compound metabolism; protoporphyrin-IX biosynthesis; 5-aminolevulinate from L-glutamyl-tRNA(Glu): step 1/2. Its function is as follows. Catalyzes the NADPH-dependent reduction of glutamyl-tRNA(Glu) to glutamate 1-semialdehyde (GSA). This chain is Glutamyl-tRNA reductase, found in Escherichia coli O157:H7.